The chain runs to 782 residues: Cadherin-5 (782 aa).

The N-terminal stretch at 1–22 (MQVLVMLLAAAGTYLGLLTAPT) is a signal peptide. The propeptide occupies 23–44 (AASNPGRQDTPSTLPLHRRQKR). Cadherin domains follow at residues 45 to 148 (DWIW…WPVF), 149 to 255 (TQLV…FPVF), 256 to 370 (TQTR…PPNF), 371 to 475 (KQPF…DNAP), and 476 to 592 (EFAK…MGAQ). Residues 45-598 (DWIWNQMHID…MGAQVGVSIQ (554 aa)) lie on the Extracellular side of the membrane. Ca(2+)-binding residues include E55 and E56. A glycan (N-linked (GlcNAc...) asparagine) is linked at N58. D106, E108, D140, I141, N142, D143, and N144 together coordinate Ca(2+). A glycan (N-linked (GlcNAc...) asparagine) is linked at N154. D174, D176, H183, and D228 together coordinate Ca(2+). N-linked (GlcNAc...) asparagine glycosylation is found at N360, N440, N522, and N534. Residues 599–619 (ALVAIFLCILTIAVISLLVYL) form a helical membrane-spanning segment. The required for interaction with PALS1 stretch occupies residues 620-659 (RRRLRKQARAHGKSVPEIHEQLVTYDEEGGGEMDTTSYDV). Residues 620–782 (RRRLRKQARA…GSDPREELLY (163 aa)) are Cytoplasmic-facing.

Part of a complex composed of AMOTL2, MAGI1 and CDH5, within the complex AMOTL2 acts as a scaffold protein for the interaction of MAGI1 with CDH5. The complex is required for coupling actin fibers to cell junctions in endothelial cells. Within the complex AMOTL2 (via its N-terminus) interacts with CDH5. Interacts (via cadherin 5 domain) with PTPRB. Interacts with TRPC4. Interacts with KRIT1. Interacts with PARD3. Interacts with RTN4 (isoform B). Interacts with PALS1; the interaction promotes PALS1 localization to cell junctions and is required for CDH5-mediated vascular lumen formation and endothelial cell. Interacts with CTNND1/p120-catenin; the interaction controls CADH5 endocytosis. Post-translationally, phosphorylated on tyrosine residues by KDR/VEGFR-2. Dephosphorylated by PTPRB. In terms of processing, O-glycosylated.

It is found in the cell junction. The protein resides in the adherens junction. The protein localises to the cell membrane. It localises to the cytoplasm. Functionally, cadherins are calcium-dependent cell adhesion proteins. They preferentially interact with themselves in a homophilic manner in connecting cells; cadherins may thus contribute to the sorting of heterogeneous cell types. This cadherin may play a important role in endothelial cell biology through control of the cohesion and organization of the intercellular junctions. It associates with alpha-catenin forming a link to the cytoskeleton. Plays a role in coupling actin fibers to cell junctions in endothelial cells, via acting as a cell junctional complex anchor for AMOTL2 and MAGI1. Acts in concert with KRIT1 and PALS1 to establish and maintain correct endothelial cell polarity and vascular lumen. These effects are mediated by recruitment and activation of the Par polarity complex and RAP1B. Required for activation of PRKCZ and for localization of phosphorylated PRKCZ, PARD3, TIAM1 and RAP1B to the cell junction. Associates with CTNND1/p120-catenin to control CADH5 endocytosis. The polypeptide is Cadherin-5 (Sus scrofa (Pig)).